We begin with the raw amino-acid sequence, 463 residues long: Argininosuccinate lyase (463 aa).

It belongs to the lyase 1 family. Argininosuccinate lyase subfamily.

It is found in the cytoplasm. The catalysed reaction is 2-(N(omega)-L-arginino)succinate = fumarate + L-arginine. It participates in amino-acid biosynthesis; L-arginine biosynthesis; L-arginine from L-ornithine and carbamoyl phosphate: step 3/3. This chain is Argininosuccinate lyase, found in Thiobacillus denitrificans (strain ATCC 25259 / T1).